Here is a 109-residue protein sequence, read N- to C-terminus: Spermidine export protein MdtI (109 aa).

Over 1–5 the chain is Periplasmic; sequence MAQFE. A helical transmembrane segment spans residues 6–26; the sequence is WVHAAWLALAIVLEIIANVFL. Over 27–35 the chain is Cytoplasmic; the sequence is KFSDGFRRK. Residues 36-56 form a helical membrane-spanning segment; the sequence is IFGLLSLAAVLAAFSALSQAV. The Periplasmic portion of the chain corresponds to 57 to 63; it reads KGIDLSV. The chain crosses the membrane as a helical span at residues 64 to 84; that stretch reads AYALWGGFGIAATLAAGWILF. At 85–87 the chain is on the cytoplasmic side; it reads GQR. The helical transmembrane segment at 88 to 108 threads the bilayer; sequence LNRKGWIGLVLLLAGMIMVKL. Residue A109 is a topological domain, periplasmic.

Belongs to the drug/metabolite transporter (DMT) superfamily. Small multidrug resistance (SMR) (TC 2.A.7.1) family. MdtI subfamily. In terms of assembly, forms a complex with MdtJ.

The protein resides in the cell inner membrane. In terms of biological role, catalyzes the excretion of spermidine. The sequence is that of Spermidine export protein MdtI (mdtI) from Escherichia coli O6:H1 (strain CFT073 / ATCC 700928 / UPEC).